A 25-amino-acid chain; its full sequence is Chaperone protein DnaK (25 aa).

Belongs to the heat shock protein 70 family.

In terms of biological role, acts as a chaperone. The sequence is that of Chaperone protein DnaK (dnaK) from Acinetobacter calcoaceticus.